The sequence spans 710 residues: Gastrulation-defective protein 3 (710 aa).

Residues Ala597–Val615 traverse the membrane as a helical segment.

It is found in the membrane. This is Gastrulation-defective protein 3 (gadr-3) from Caenorhabditis elegans.